We begin with the raw amino-acid sequence, 103 residues long: Large ribosomal subunit protein bL28 (103 aa).

It belongs to the bacterial ribosomal protein bL28 family.

The polypeptide is Large ribosomal subunit protein bL28 (Anaplasma phagocytophilum (strain HZ)).